The following is a 215-amino-acid chain: Adenylate kinase (215 aa).

Residue 10–15 participates in ATP binding; that stretch reads GAGKGT. The NMP stretch occupies residues 30-59; it reads STGDMFRAAMKNETEMGKLAKSFIDKGELV. Residues Thr-31, Arg-36, 57 to 59, 86 to 89, and Gln-93 each bind AMP; these read ELV and GYPR. Residues 127–165 are LID; it reads GRYICRNCGATYHKIFNPTKVEGTCDVCGSHDLYQRADD. Residue Arg-128 coordinates ATP. 2 residues coordinate Zn(2+): Cys-131 and Cys-134. Residue 137 to 138 participates in ATP binding; the sequence is TY. Zn(2+) is bound by residues Cys-151 and Cys-154. The AMP site is built by Arg-162 and Arg-173. Gln-201 serves as a coordination point for ATP.

It belongs to the adenylate kinase family. In terms of assembly, monomer.

The protein localises to the cytoplasm. The catalysed reaction is AMP + ATP = 2 ADP. The protein operates within purine metabolism; AMP biosynthesis via salvage pathway; AMP from ADP: step 1/1. In terms of biological role, catalyzes the reversible transfer of the terminal phosphate group between ATP and AMP. Plays an important role in cellular energy homeostasis and in adenine nucleotide metabolism. This is Adenylate kinase from Lactococcus lactis subsp. cremoris (strain SK11).